We begin with the raw amino-acid sequence, 183 residues long: MSESEPVHIEYADETELLTEFRNFMSDPDTREKAANYLLNSLIDESILGIVFEVHHAYKTGSVAAIEGQPEDPKSFTIVDMPDMDVFGSTNSKKAIDCSCPNCNRIVAASRFAPHLEKCMGMGRNSSRIASRRIANTRDGGNYFGADEDDEDDADWSGEKRKKKIAPVRTNGSKKNVMKIYFL.

An SGF11-type zinc finger spans residues 98 to 119; the sequence is CSCPNCNRIVAASRFAPHLEKC. A disordered region spans residues 140-167; the sequence is GGNYFGADEDDEDDADWSGEKRKKKIAP. Residues 146-156 are compositionally biased toward acidic residues; that stretch reads ADEDDEDDADW.

It belongs to the SGF11 family. In terms of assembly, component of some SAGA transcription coactivator-HAT complexes. Within the SAGA complex, participates in a subcomplex of SAGA called the DUB module (deubiquitination module).

It is found in the nucleus. In terms of biological role, component of the transcription regulatory histone acetylation (HAT) complex SAGA, a multiprotein complex that activates transcription by remodeling chromatin and mediating histone acetylation and deubiquitination. Within the SAGA complex, participates in a subcomplex that specifically deubiquitinates histone H2B. The SAGA complex is recruited to specific gene promoters by activators, where it is required for transcription. The polypeptide is SAGA-associated factor 11 homolog (Culex quinquefasciatus (Southern house mosquito)).